Here is a 387-residue protein sequence, read N- to C-terminus: Solute carrier family 25 protein Shawn (387 aa).

3 Solcar repeats span residues 37–156, 179–263, and 269–366; these read IRPL…FKAR, IPFL…LKSS, and PTFS…GKSF. Transmembrane regions (helical) follow at residues 43 to 63, 128 to 148, 179 to 199, 235 to 255, 275 to 295, and 337 to 357; these read VASA…LDVI, LWSG…IYFV, IPFL…VTCV, LWRG…IYWT, FAAG…FDVV, and AIFS…AIMI.

This sequence belongs to the mitochondrial carrier (TC 2.A.29) family.

The protein resides in the mitochondrion inner membrane. Mitochondrial transporter required for glutathione import into mitochondria. This chain is Solute carrier family 25 protein Shawn, found in Drosophila melanogaster (Fruit fly).